The chain runs to 436 residues: Enolase (436 aa).

Histidine 159 and glutamate 168 together coordinate substrate. Catalysis depends on glutamate 211, which acts as the Proton donor. 3 residues coordinate Mg(2+): aspartate 246, glutamate 295, and aspartate 320. 2 residues coordinate substrate: glutamate 295 and aspartate 320. The active-site Proton acceptor is lysine 345. Substrate is bound by residues 372 to 375 (SHRS) and lysine 396.

The protein belongs to the enolase family. Homodimer. Mg(2+) is required as a cofactor.

It localises to the cytoplasm. It catalyses the reaction (2R)-2-phosphoglycerate = phosphoenolpyruvate + H2O. Its pathway is carbohydrate degradation; glycolysis; pyruvate from D-glyceraldehyde 3-phosphate: step 4/5. The sequence is that of Enolase from Cunninghamella elegans.